A 330-amino-acid chain; its full sequence is Elongation factor Ts (330 aa).

An involved in Mg(2+) ion dislocation from EF-Tu region spans residues 79–82 (TDFV).

The protein belongs to the EF-Ts family.

The protein resides in the cytoplasm. Functionally, associates with the EF-Tu.GDP complex and induces the exchange of GDP to GTP. It remains bound to the aminoacyl-tRNA.EF-Tu.GTP complex up to the GTP hydrolysis stage on the ribosome. This Bacteroides thetaiotaomicron (strain ATCC 29148 / DSM 2079 / JCM 5827 / CCUG 10774 / NCTC 10582 / VPI-5482 / E50) protein is Elongation factor Ts.